The sequence spans 547 residues: (R)-citramalate synthase (547 aa).

Positions 8-278 constitute a Pyruvate carboxyltransferase domain; the sequence is LWLYDTTLRD…YDCIEPEKLA (271 aa).

Belongs to the alpha-IPM synthase/homocitrate synthase family.

The enzyme catalyses pyruvate + acetyl-CoA + H2O = (3R)-citramalate + CoA + H(+). It participates in amino-acid biosynthesis; L-isoleucine biosynthesis; 2-oxobutanoate from pyruvate: step 1/3. In terms of biological role, catalyzes the condensation of pyruvate and acetyl-coenzyme A to form (R)-citramalate. This is (R)-citramalate synthase from Synechocystis sp. (strain ATCC 27184 / PCC 6803 / Kazusa).